A 299-amino-acid chain; its full sequence is GTPase Era (299 aa).

The 168-residue stretch at 5-172 (KSGFVSIIGR…IDVLKSFLPE (168 aa)) folds into the Era-type G domain. The tract at residues 13–20 (GRPNVGKS) is G1. 13 to 20 (GRPNVGKS) contacts GTP. A G2 region spans residues 39-43 (QTTRN). The segment at 60-63 (DTPG) is G3. Residues 60–64 (DTPGI) and 122–125 (NKID) contribute to the GTP site. The tract at residues 122 to 125 (NKID) is G4. The interval 151–153 (ISA) is G5. In terms of domain architecture, KH type-2 spans 203 to 280 (TSEEIPHAIG…YLELWVKVQR (78 aa)).

Belongs to the TRAFAC class TrmE-Era-EngA-EngB-Septin-like GTPase superfamily. Era GTPase family. As to quaternary structure, monomer.

It localises to the cytoplasm. It is found in the cell membrane. Its function is as follows. An essential GTPase that binds both GDP and GTP, with rapid nucleotide exchange. Plays a role in 16S rRNA processing and 30S ribosomal subunit biogenesis and possibly also in cell cycle regulation and energy metabolism. This is GTPase Era from Staphylococcus epidermidis (strain ATCC 12228 / FDA PCI 1200).